A 285-amino-acid polypeptide reads, in one-letter code: Probable ribosomal RNA small subunit methyltransferase A (285 aa).

S-adenosyl-L-methionine is bound by residues His29, Leu31, Gly58, Glu79, Asp107, and Asn122.

The protein belongs to the class I-like SAM-binding methyltransferase superfamily. rRNA adenine N(6)-methyltransferase family. RsmA subfamily.

It localises to the cytoplasm. Functionally, specifically dimethylates two adjacent adenosines in the loop of a conserved hairpin near the 3'-end of 16S rRNA in the 30S particle. May play a critical role in biogenesis of 30S subunits. In Haloarcula marismortui (strain ATCC 43049 / DSM 3752 / JCM 8966 / VKM B-1809) (Halobacterium marismortui), this protein is Probable ribosomal RNA small subunit methyltransferase A.